Here is a 326-residue protein sequence, read N- to C-terminus: D-threonate 4-phosphate dehydrogenase (326 aa).

Substrate-binding residues include histidine 138 and threonine 139. A divalent metal cation contacts are provided by histidine 168, histidine 212, and histidine 267. Substrate is bound by residues lysine 275, asparagine 284, and arginine 293.

The protein belongs to the PdxA family. PdxA2 subfamily. As to quaternary structure, homodimer. A divalent metal cation is required as a cofactor.

It carries out the reaction 4-O-phospho-D-threonate + NAD(+) = dihydroxyacetone phosphate + CO2 + NADH. Catalyzes the NAD-dependent oxidation and subsequent decarboxylation of D-threonate 4-phosphate to produce dihydroxyacetone phosphate (DHAP). Can also use 4-hydroxy-L-threonine 4-phosphate as substrate. The polypeptide is D-threonate 4-phosphate dehydrogenase (Pectobacterium atrosepticum (strain SCRI 1043 / ATCC BAA-672) (Erwinia carotovora subsp. atroseptica)).